Reading from the N-terminus, the 437-residue chain is Adenylosuccinate synthetase (437 aa).

GTP contacts are provided by residues 12 to 18 (GDEGKGK) and 40 to 42 (GHT). The Proton acceptor role is filled by Asp-13. The Mg(2+) site is built by Asp-13 and Gly-40. IMP-binding positions include 13–16 (DEGK), 38–41 (NAGH), Thr-128, Arg-142, Gln-223, Thr-238, and Arg-302. The active-site Proton donor is His-41. 298 to 304 (TTTGRRR) lines the substrate pocket. GTP is bound by residues Arg-304, 330 to 332 (KLD), and 412 to 414 (SLG).

This sequence belongs to the adenylosuccinate synthetase family. Homodimer. The cofactor is Mg(2+).

It is found in the cytoplasm. It catalyses the reaction IMP + L-aspartate + GTP = N(6)-(1,2-dicarboxyethyl)-AMP + GDP + phosphate + 2 H(+). The protein operates within purine metabolism; AMP biosynthesis via de novo pathway; AMP from IMP: step 1/2. In terms of biological role, plays an important role in the de novo pathway of purine nucleotide biosynthesis. Catalyzes the first committed step in the biosynthesis of AMP from IMP. The polypeptide is Adenylosuccinate synthetase (Synechococcus sp. (strain CC9311)).